Consider the following 103-residue polypeptide: Pro-corazonin (103 aa).

An N-terminal signal peptide occupies residues 1-19 (MSANVTLLLIFVTLASVTA). The residue at position 20 (Gln-20) is a Pyrrolidone carboxylic acid. Asn-30 bears the Asparagine amide mark. Positions 34–103 (DQGHLRPELK…NLNAMMDAFY (70 aa)) are excised as a propeptide.

As to expression, expressed in corpora cardiaca (CC), corpora allata (CA), antennal lobe (AL) and gnathal ganglion (GNG) (at protein level). Expression in CC and CA detected in all animals, expression in AL and in GNG in some animals.

It is found in the secreted. In terms of biological role, cardioactive peptide. Corazonin is probably involved in the physiological regulation of the heart beat. This chain is Pro-corazonin, found in Agrotis ipsilon (Black cutworm moth).